We begin with the raw amino-acid sequence, 320 residues long: Zona pellucida-binding protein 1 (320 aa).

Residues N85 and N158 are each glycosylated (N-linked (GlcNAc...) asparagine).

Belongs to the zona pellucida-binding protein Sp38 family.

It localises to the cytoplasmic vesicle. The protein resides in the secretory vesicle. It is found in the acrosome. Its subcellular location is the secreted. The protein localises to the acrosome membrane. Functionally, plays a role in sperm morphogenesis and in sperm-oocyte interaction during fertilization. The chain is Zona pellucida-binding protein 1 (ZPBP1) from Gallus gallus (Chicken).